The primary structure comprises 637 residues: Chaperone protein DnaK (637 aa).

T198 carries the post-translational modification Phosphothreonine; by autocatalysis. Residues 600-637 (IAQQQAQAQQAQGADAGAQSKDDDVVDAEFEEVKDDKK) form a disordered region. Over residues 601–618 (AQQQAQAQQAQGADAGAQ) the composition is skewed to low complexity. The segment covering 623–637 (DVVDAEFEEVKDDKK) has biased composition (acidic residues).

Belongs to the heat shock protein 70 family.

Functionally, acts as a chaperone. In Vibrio parahaemolyticus serotype O3:K6 (strain RIMD 2210633), this protein is Chaperone protein DnaK.